Consider the following 191-residue polypeptide: Endoribonuclease YbeY (191 aa).

H122, H126, and H132 together coordinate Zn(2+). The disordered stretch occupies residues 164 to 191; sequence QPKPSGPKAFPDAAERAELDKEVPGGGI. Residues 176-191 are compositionally biased toward basic and acidic residues; it reads AAERAELDKEVPGGGI.

This sequence belongs to the endoribonuclease YbeY family. It depends on Zn(2+) as a cofactor.

The protein localises to the cytoplasm. In terms of biological role, single strand-specific metallo-endoribonuclease involved in late-stage 70S ribosome quality control and in maturation of the 3' terminus of the 16S rRNA. The chain is Endoribonuclease YbeY from Corynebacterium aurimucosum (strain ATCC 700975 / DSM 44827 / CIP 107346 / CN-1) (Corynebacterium nigricans).